The sequence spans 467 residues: MPYRIPRLFISATRKSSGKTFIAVGLTAALSARGLVVQPFKKGPDYIDPRWHSLAAGRECRNLDDFIMGRPKVLTSFVAHAQGADVAIIEGNLGLFDGQDLEGSDSSAALAKALGAPVLLVVDCKHLARSVAPLVCGHLHFPGGETIVGIILNNVATPRQEKRLREAIERFCPIPILGAIPRSAEIMIDERHLGLVPANEKQGAPHTVETMGRMMESHLDLDRLVALAATATPLALPDNPPALASKAPLVGGRPVRVGYAADQAFSFYYPDNLEALRQNGVELVPFSLLDEQPLPQVDGLYIGGGFPEMFMEHLQQNRATLETIRTRSELGMPIYAECGGLMVLSQRLIWAGKRVELAGALPIEITMHPKPQGYGYMKIHGTGALPWPPVDQEICCHEFHYSKVSKLGEGVRFAYQVTRGSGVDGWHDGILYHNIFASYAHIHVEGAPEWAPFLARFWRERGSFSQP.

Residues 256 to 449 (RVGYAADQAF…AHIHVEGAPE (194 aa)) form the GATase cobBQ-type domain. The Nucleophile role is filled by C338.

The protein belongs to the CobB/CbiA family. The cofactor is Mg(2+).

The enzyme catalyses cob(II)yrinate + 2 L-glutamine + 2 ATP + 2 H2O = cob(II)yrinate a,c diamide + 2 L-glutamate + 2 ADP + 2 phosphate + 2 H(+). It functions in the pathway cofactor biosynthesis; adenosylcobalamin biosynthesis; cob(II)yrinate a,c-diamide from sirohydrochlorin (anaerobic route): step 10/10. Functionally, catalyzes the ATP-dependent amidation of the two carboxylate groups at positions a and c of cobyrinate, using either L-glutamine or ammonia as the nitrogen source. In Magnetococcus marinus (strain ATCC BAA-1437 / JCM 17883 / MC-1), this protein is Cobyrinate a,c-diamide synthase.